We begin with the raw amino-acid sequence, 823 residues long: Aminopeptidase O (823 aa).

Histidine 481 serves as a coordination point for Zn(2+). Glutamate 482 (proton acceptor) is an active-site residue. Zn(2+)-binding residues include histidine 485 and glutamate 504. Residues 693–703 (RRPRKRKRGKR) carry the Nucleolar localization signal motif.

Belongs to the peptidase M1 family. The cofactor is Zn(2+). Expressed in testis, heart, brain, lung, liver, skeletal muscle, kidney and ovary. Expressed in vascular tissues.

It is found in the nucleus. Its subcellular location is the nucleolus. The protein localises to the cytoplasm. Aminopeptidase which catalyzes the hydrolysis of amino acid residues from the N-terminus of peptide or protein substrates. This is Aminopeptidase O (Aopep) from Mus musculus (Mouse).